The following is a 140-amino-acid chain: MTIKTYHLYVVSAEKQIFSGLVEKIQVTGIEGDLGIFPRHTPLLTQIKPGLIYLVTEDGKTEYIYISGGILEVQLNIVTVLADTAIRGEDLDEKRAINSKLQAQENIKNLNYDMSYTQASVELAKALAKLRVIKLIKKAI.

The protein belongs to the ATPase epsilon chain family. As to quaternary structure, F-type ATPases have 2 components, CF(1) - the catalytic core - and CF(0) - the membrane proton channel. CF(1) has five subunits: alpha(3), beta(3), gamma(1), delta(1), epsilon(1). CF(0) has three main subunits: a, b and c.

Its subcellular location is the cell membrane. Produces ATP from ADP in the presence of a proton gradient across the membrane. The sequence is that of ATP synthase epsilon chain from Baumannia cicadellinicola subsp. Homalodisca coagulata.